The chain runs to 197 residues: Adenylyl-sulfate kinase (197 aa).

31–38 provides a ligand contact to ATP; the sequence is GLSGAGKS. S105 (phosphoserine intermediate) is an active-site residue.

Belongs to the APS kinase family.

The enzyme catalyses adenosine 5'-phosphosulfate + ATP = 3'-phosphoadenylyl sulfate + ADP + H(+). Its pathway is sulfur metabolism; hydrogen sulfide biosynthesis; sulfite from sulfate: step 2/3. Its function is as follows. Catalyzes the synthesis of activated sulfate. In Aeromonas hydrophila subsp. hydrophila (strain ATCC 7966 / DSM 30187 / BCRC 13018 / CCUG 14551 / JCM 1027 / KCTC 2358 / NCIMB 9240 / NCTC 8049), this protein is Adenylyl-sulfate kinase.